Consider the following 289-residue polypeptide: Ribosomal RNA small subunit methyltransferase I (289 aa).

The protein belongs to the methyltransferase superfamily. RsmI family.

Its subcellular location is the cytoplasm. The catalysed reaction is cytidine(1402) in 16S rRNA + S-adenosyl-L-methionine = 2'-O-methylcytidine(1402) in 16S rRNA + S-adenosyl-L-homocysteine + H(+). Its function is as follows. Catalyzes the 2'-O-methylation of the ribose of cytidine 1402 (C1402) in 16S rRNA. The protein is Ribosomal RNA small subunit methyltransferase I of Halalkalibacterium halodurans (strain ATCC BAA-125 / DSM 18197 / FERM 7344 / JCM 9153 / C-125) (Bacillus halodurans).